Here is an 880-residue protein sequence, read N- to C-terminus: DNA mismatch repair protein MutS (880 aa).

635–642 (GPNMGGKS) contributes to the ATP binding site.

This sequence belongs to the DNA mismatch repair MutS family.

This protein is involved in the repair of mismatches in DNA. It is possible that it carries out the mismatch recognition step. This protein has a weak ATPase activity. The sequence is that of DNA mismatch repair protein MutS from Nitrosomonas eutropha (strain DSM 101675 / C91 / Nm57).